Consider the following 350-residue polypeptide: Streptomycin biosynthesis operon possible regulatory protein (350 aa).

The span at 1–10 (MEHISGNSPE) shows a compositional bias: polar residues. Disordered regions lie at residues 1-20 (MEHISGNSPEQVRERSAAVT), 168-189 (AGVPQSNVRIGRDGRARPLDPT), and 211-258 (AAQA…SRAD). Basic and acidic residues-rich tracts occupy residues 177–189 (IGRDGRARPLDPT) and 223–242 (DVRKRLSRGESPLPERDRQQ).

This is Streptomycin biosynthesis operon possible regulatory protein (strR) from Streptomyces griseus.